The sequence spans 230 residues: RNA chaperone ProQ (230 aa).

The disordered stretch occupies residues A106–I181. The span at R146–P155 shows a compositional bias: basic and acidic residues. The span at A158–S167 shows a compositional bias: low complexity.

The protein belongs to the ProQ family.

The protein resides in the cytoplasm. Functionally, RNA chaperone with significant RNA binding, RNA strand exchange and RNA duplexing activities. May regulate ProP activity through an RNA-based, post-transcriptional mechanism. The polypeptide is RNA chaperone ProQ (Cronobacter sakazakii (strain ATCC BAA-894) (Enterobacter sakazakii)).